We begin with the raw amino-acid sequence, 189 residues long: Large ribosomal subunit protein eL14 (189 aa).

The protein belongs to the eukaryotic ribosomal protein eL14 family.

Component of the large ribosomal subunit. The ribosome is a large ribonucleoprotein complex responsible for the synthesis of proteins in the cell. The protein is Large ribosomal subunit protein eL14 of Trypanosoma brucei brucei.